Here is a 247-residue protein sequence, read N- to C-terminus: UDP-2,3-diacylglucosamine hydrolase (247 aa).

Residues aspartate 8, histidine 10, aspartate 41, asparagine 79, and histidine 114 each contribute to the Mn(2+) site. 79-80 (NR) lines the substrate pocket. Positions 122, 160, 171, 174, and 202 each coordinate substrate. Mn(2+) contacts are provided by histidine 202 and histidine 204.

Belongs to the LpxH family. It depends on Mn(2+) as a cofactor.

It localises to the cell inner membrane. It catalyses the reaction UDP-2-N,3-O-bis[(3R)-3-hydroxytetradecanoyl]-alpha-D-glucosamine + H2O = 2-N,3-O-bis[(3R)-3-hydroxytetradecanoyl]-alpha-D-glucosaminyl 1-phosphate + UMP + 2 H(+). It participates in glycolipid biosynthesis; lipid IV(A) biosynthesis; lipid IV(A) from (3R)-3-hydroxytetradecanoyl-[acyl-carrier-protein] and UDP-N-acetyl-alpha-D-glucosamine: step 4/6. Functionally, hydrolyzes the pyrophosphate bond of UDP-2,3-diacylglucosamine to yield 2,3-diacylglucosamine 1-phosphate (lipid X) and UMP by catalyzing the attack of water at the alpha-P atom. Involved in the biosynthesis of lipid A, a phosphorylated glycolipid that anchors the lipopolysaccharide to the outer membrane of the cell. This Xanthomonas axonopodis pv. citri (strain 306) protein is UDP-2,3-diacylglucosamine hydrolase.